Here is a 741-residue protein sequence, read N- to C-terminus: Protein O-mannosyl-transferase TMTC4 (741 aa).

At 1–10 the chain is on the cytoplasmic side; that stretch reads MVELDADLDH. Residues 11-31 form a helical membrane-spanning segment; the sequence is IVPSVLPPFWAKLVVGFVSLL. The Extracellular portion of the chain corresponds to 32-110; it reads CFARSYDGDF…FHPVGFHVVN (79 aa). N-linked (GlcNAc...) asparagine glycosylation is present at asparagine 77. Residues 111-131 form a helical membrane-spanning segment; sequence ILLHGSISILMLDVFSVLFGG. The Cytoplasmic portion of the chain corresponds to 132 to 146; that stretch reads LQYTGKGQRVHLAPR. 2 helical membrane passes run 147 to 166 and 167 to 185; these read ASLLATLLFAVHPVHTECVA and GVVGRADLLCALFFLLSFL. At 186–198 the chain is on the cytoplasmic side; that stretch reads GYCQAFKETGNKE. Residues 199 to 219 traverse the membrane as a helical segment; the sequence is GTHSSTFWVLLSIFLGAVAML. The Extracellular portion of the chain corresponds to 220–224; that stretch reads CKEQG. Residues 225-245 form a helical membrane-spanning segment; the sequence is ITVLGLNAVFDILVIGKLDIL. The Cytoplasmic portion of the chain corresponds to 246-265; the sequence is AAVRKVLHKDKSQENAGMFK. The helical transmembrane segment at 266–286 threads the bilayer; the sequence is NGGLLFRIALLTIGGTSMLYI. The Extracellular segment spans residues 287–354; the sequence is RWKIMGTGPP…PLIKSVGDWR (68 aa). The helical transmembrane segment at 355–375 threads the bilayer; sequence VIALAALWLCLIGLIFQALCS. At 376-382 the chain is on the cytoplasmic side; that stretch reads EDSCKRR. The helical transmembrane segment at 383–403 threads the bilayer; it reads ILTLGLGFLVIPFLPASNLFF. The Extracellular portion of the chain corresponds to 404 to 412; it reads RVGFVVAER. A helical membrane pass occupies residues 413-433; sequence VLYLPSAGYCVLLTFGFGALS. Topologically, residues 434 to 441 are cytoplasmic; it reads RHTKKKKP. Residues 442-462 form a helical membrane-spanning segment; that stretch reads VAAIILGILLINALRCVIRSG. Residues 463–741 lie on the Extracellular side of the membrane; it reads EWRSEEQLFR…KLEQTQKKDV (279 aa). TPR repeat units follow at residues 482–515, 516–549, 550–583, 584–617, 618–651, 652–685, and 686–719; these read AKVHYNIGKNLADQGNQTAAIKYYREAVRLNPKY, VHAMNNLGNILKERNELQEAEELLSLAVQIQPDF, AAAWMNLGIVQNSLKRFEEAEQSYRTAIKHRRKY, PDCYYNLGRLYADLNRHVDALNAWRNATVLKPEH, SLAWNNMIILLDNTGNLAQAEAVGREALQLIPND, HSLMFSLANVLGKSQKYKESEALFLKAIKANPNV, and ASYHGNLAVLYHRWGHLDSAKKHYEISLQLDPVA. A glycan (N-linked (GlcNAc...) asparagine) is linked at asparagine 497. A glycan (N-linked (GlcNAc...) asparagine) is linked at asparagine 609. Residue asparagine 725 is glycosylated (N-linked (GlcNAc...) asparagine).

It belongs to the TMTC family.

It localises to the membrane. It is found in the endoplasmic reticulum. It carries out the reaction a di-trans,poly-cis-dolichyl beta-D-mannosyl phosphate + L-seryl-[protein] = 3-O-(alpha-D-mannosyl)-L-seryl-[protein] + a di-trans,poly-cis-dolichyl phosphate + H(+). It catalyses the reaction a di-trans,poly-cis-dolichyl beta-D-mannosyl phosphate + L-threonyl-[protein] = 3-O-(alpha-D-mannosyl)-L-threonyl-[protein] + a di-trans,poly-cis-dolichyl phosphate + H(+). It functions in the pathway protein modification; protein glycosylation. Functionally, transfers mannosyl residues to the hydroxyl group of serine or threonine residues. The 4 members of the TMTC family are O-mannosyl-transferases dedicated primarily to the cadherin superfamily, each member seems to have a distinct role in decorating the cadherin domains with O-linked mannose glycans at specific regions. Also acts as O-mannosyl-transferase on other proteins such as PDIA3. In Mus musculus (Mouse), this protein is Protein O-mannosyl-transferase TMTC4.